Here is a 206-residue protein sequence, read N- to C-terminus: Protein Nef (206 aa).

Residue Gly2 is the site of N-myristoyl glycine; by host attachment. Ser6 bears the Phosphoserine; by host mark. Residues 62–65 (EEEE) are acidic; interacts with host PACS1 and PACS2; stabilizes the interaction of NEF/MHC-I with host AP1M1; necessary for MHC-I internalization. Residues 69 to 78 (PVTPQVPLRP) are SH3-binding; interaction with Src family tyrosine kinases. The PxxP; stabilizes the interaction of NEF/MHC-I with host AP1M1; necessary for MHC-I internalization signature appears at 72 to 75 (PQVP). A mediates dimerization, Nef-PTE1 interaction region spans residues 108 to 124 (DILDLWIYHTQGYFPDW). Residues 148–180 (VEPDKIEEANKGENTSLLHPVSLHGMDDPEREV) are binding to ATP6V1H. The short motif at 164-165 (LL) is the Dileucine internalization motif; necessary for CD4 internalization element. The short motif at 174–175 (DD) is the Diacidic; necessary for CD4 internalization element.

This sequence belongs to the lentivirus primate group Nef protein family. As to quaternary structure, monomer; cytosolic form. Homodimer; membrane bound form. Interacts with Nef associated p21-activated kinase (PAK2); this interaction activates PAK2. Associates with the Nef-MHC-I-AP1 complex; this complex is required for MHC-I internalization. Interacts (via C-terminus) with host PI3-kinase. Interacts with host PACS1; this interaction seems to be weak. Interacts with host PACS2. Interacts with host LCK and MAPK3; these interactions inhibit the kinase activity of the latter. Interacts with host ATP6V1H; this interaction may play a role in CD4 endocytosis. Associates with the CD4-Nef-AP2 complex; this complex is required for CD4 internalization. Interacts with host AP2 subunit alpha and AP2 subunit sigma2. Interacts with TCR-zeta chain; this interaction up-regulates the Fas ligand (FasL) surface expression. Interacts with host HCK, LYN, and SRC; these interactions activate the Src family kinases. Interacts with MAP3K5; this interaction inhibits the Fas and TNFR-mediated death signals. Interacts with beta-COP and PTE1. Interacts with human RACK1; this increases Nef phosphorylation by PKC. Interacts with TP53; this interaction decreases the half-life of TP53, protecting the infected cell against p53-mediated apoptosis. Post-translationally, phosphorylated on serine residues, probably by host PKCdelta and theta. Myristoylated. In terms of processing, the virion-associated Nef proteins are cleaved by the viral protease to release the soluble C-terminal core protein. Nef is probably cleaved concomitantly with viral structural proteins on maturation of virus particles.

It is found in the host cell membrane. It localises to the virion. The protein resides in the secreted. The protein localises to the host Golgi apparatus membrane. In terms of biological role, factor of infectivity and pathogenicity, required for optimal virus replication. Alters numerous pathways of T-lymphocyte function and down-regulates immunity surface molecules in order to evade host defense and increase viral infectivity. Alters the functionality of other immunity cells, like dendritic cells, monocytes/macrophages and NK cells. Functionally, in infected CD4(+) T-lymphocytes, down-regulates the surface MHC-I, mature MHC-II, CD4, CD28, CCR5 and CXCR4 molecules. Mediates internalization and degradation of host CD4 through the interaction of with the cytoplasmic tail of CD4, the recruitment of AP-2 (clathrin adapter protein complex 2), internalization through clathrin coated pits, and subsequent transport to endosomes and lysosomes for degradation. Diverts host MHC-I molecules to the trans-Golgi network-associated endosomal compartments by an endocytic pathway to finally target them for degradation. MHC-I down-regulation may involve AP-1 (clathrin adapter protein complex 1) or possibly Src family kinase-ZAP70/Syk-PI3K cascade recruited by PACS2. In consequence infected cells are masked for immune recognition by cytotoxic T-lymphocytes. Decreasing the number of immune receptors also prevents reinfection by more HIV particles (superinfection). Down-regulates host SERINC3 and SERINC5 thereby excluding these proteins from the viral particles. Virion infectivity is drastically higher when SERINC3 or SERINC5 are excluded from the viral envelope, because these host antiviral proteins impair the membrane fusion event necessary for subsequent virion penetration. Bypasses host T-cell signaling by inducing a transcriptional program nearly identical to that of anti-CD3 cell activation. Interaction with TCR-zeta chain up-regulates the Fas ligand (FasL). Increasing surface FasL molecules and decreasing surface MHC-I molecules on infected CD4(+) cells send attacking cytotoxic CD8+ T-lymphocytes into apoptosis. Its function is as follows. Plays a role in optimizing the host cell environment for viral replication without causing cell death by apoptosis. Protects the infected cells from apoptosis in order to keep them alive until the next virus generation is ready to strike. Inhibits the Fas and TNFR-mediated death signals by blocking MAP3K5/ASK1. Decreases the half-life of TP53, protecting the infected cell against p53-mediated apoptosis. Inhibits the apoptotic signals regulated by the Bcl-2 family proteins through the formation of a Nef/PI3-kinase/PAK2 complex that leads to activation of PAK2 and induces phosphorylation of Bad. In terms of biological role, extracellular Nef protein targets CD4(+) T-lymphocytes for apoptosis by interacting with CXCR4 surface receptors. The chain is Protein Nef from Human immunodeficiency virus type 1 group M subtype B (isolate HXB2) (HIV-1).